We begin with the raw amino-acid sequence, 174 residues long: Ribosome rescue factor SmrB (174 aa).

One can recognise a Smr domain in the interval 96 to 171 (LDLHGMNQQQ…GDSAILVLLD (76 aa)).

This sequence belongs to the SmrB family. Associates with collided ribosomes, but not with correctly translating polysomes.

Its function is as follows. Acts as a ribosome collision sensor. Detects stalled/collided disomes (pairs of ribosomes where the leading ribosome is stalled and a second ribosome has collided with it) and endonucleolytically cleaves mRNA at the 5' boundary of the stalled ribosome. Stalled/collided disomes form a new interface (primarily via the 30S subunits) that binds SmrB. Cleaved mRNA becomes available for tmRNA ligation, leading to ribosomal subunit dissociation and rescue of stalled ribosomes. The chain is Ribosome rescue factor SmrB from Aeromonas hydrophila subsp. hydrophila (strain ATCC 7966 / DSM 30187 / BCRC 13018 / CCUG 14551 / JCM 1027 / KCTC 2358 / NCIMB 9240 / NCTC 8049).